We begin with the raw amino-acid sequence, 61 residues long: Small ribosomal subunit protein uS14 (61 aa).

C24, C27, C40, and C43 together coordinate Zn(2+).

The protein belongs to the universal ribosomal protein uS14 family. Zinc-binding uS14 subfamily. In terms of assembly, part of the 30S ribosomal subunit. Contacts proteins S3 and S10. The cofactor is Zn(2+).

Its function is as follows. Binds 16S rRNA, required for the assembly of 30S particles and may also be responsible for determining the conformation of the 16S rRNA at the A site. This chain is Small ribosomal subunit protein uS14, found in Anaeromyxobacter sp. (strain Fw109-5).